A 129-amino-acid polypeptide reads, in one-letter code: Small ribosomal subunit protein uS11 (129 aa).

The protein belongs to the universal ribosomal protein uS11 family. Part of the 30S ribosomal subunit. Interacts with proteins S7 and S18. Binds to IF-3.

Functionally, located on the platform of the 30S subunit, it bridges several disparate RNA helices of the 16S rRNA. Forms part of the Shine-Dalgarno cleft in the 70S ribosome. The protein is Small ribosomal subunit protein uS11 of Hydrogenovibrio crunogenus (strain DSM 25203 / XCL-2) (Thiomicrospira crunogena).